An 846-amino-acid polypeptide reads, in one-letter code: Disks large-associated protein 5 (846 aa).

S67 is modified (phosphoserine; by CDK1). A coiled-coil region spans residues 90 to 120 (RKQMLQKYKEEKQLQKLKEQREKAKRGIFKV). The tract at residues 153–284 (TRSKAKDQME…TNATSGMNPD (132 aa)) is disordered. Basic and acidic residues-rich tracts occupy residues 156–174 (KAKDQMEQTKIDNESDVRA) and 182–194 (TSEKKVSDKEKKV). At S202 the chain carries Phosphoserine. Positions 203 to 225 (LRMTRSATQAAKQVPRTVSSTTA) are enriched in polar residues. Over residues 250-266 (KNVETKPDKGISCKVDS) the composition is skewed to basic and acidic residues. Residues 269 to 281 (NTLNSQTNATSGM) are compositionally biased toward polar residues. At T326 the chain carries Phosphothreonine. T329 is subject to Phosphothreonine; by CDK1. T338 is subject to Phosphothreonine. A Glycyl lysine isopeptide (Lys-Gly) (interchain with G-Cter in SUMO2) cross-link involves residue K347. A phosphothreonine; by CDK1 mark is found at T401 and T402. S618 is modified (phosphoserine; by CDK1). Residue S627 is modified to Phosphoserine; by AURKA. Over residues 628–671 (VSSEGPSQRLGTPKSVNKAVSQSRNEMGIPQQTTSPENAGPQNT) the composition is skewed to polar residues. The tract at residues 628–674 (VSSEGPSQRLGTPKSVNKAVSQSRNEMGIPQQTTSPENAGPQNTKSE) is disordered. Phosphoserine is present on residues S629 and S634. A Phosphothreonine; by CDK1 modification is found at T639. At S642 the chain carries Phosphoserine; by CDK1. A Phosphoserine modification is found at S662. S725 and S757 each carry phosphoserine; by AURKA. T759 is subject to Phosphothreonine; by CDK1. 2 positions are modified to phosphoserine: S774 and S777. T784 is modified (phosphothreonine). Phosphoserine is present on residues S806 and S812. The residue at position 830 (S830) is a Phosphoserine; by AURKA. S839 is modified (phosphoserine; by CDK1).

This sequence belongs to the SAPAP family. As to quaternary structure, interacts with CDK1. Interacts with the C-terminal proline-rich region of FBXO7. Recruited by FBXO7 to a SCF (SKP1-CUL1-F-box) protein complex in a CDK1/Cyclin B-phosphorylation dependent manner. Interacts with CDH1. In terms of processing, ubiquitinated, leading to its degradation. Decreased phosphorylation levels are associated with the differentiation of intestinal epithelial cells. Abundantly expressed in fetal liver. Expressed at lower levels in bone marrow, testis, colon, and placenta.

Its subcellular location is the nucleus. The protein localises to the cytoplasm. It localises to the cytoskeleton. It is found in the spindle. Its function is as follows. Potential cell cycle regulator that may play a role in carcinogenesis of cancer cells. Mitotic phosphoprotein regulated by the ubiquitin-proteasome pathway. Key regulator of adherens junction integrity and differentiation that may be involved in CDH1-mediated adhesion and signaling in epithelial cells. This chain is Disks large-associated protein 5 (DLGAP5), found in Homo sapiens (Human).